Reading from the N-terminus, the 182-residue chain is uncharacterized protein (182 aa).

The next 2 membrane-spanning stretches (helical) occupy residues 29–49 (IISG…AGLP) and 63–83 (FYFP…MLTL).

The protein resides in the cell membrane. This is an uncharacterized protein from Ureaplasma parvum serovar 3 (strain ATCC 700970).